The following is a 604-amino-acid chain: BTB/POZ domain-containing protein SR1IP1 (604 aa).

The region spanning 27 to 96 (SDVTVHVGEA…CYGINFDMST (70 aa)) is the BTB domain. Residues 201 to 474 (DWWAEDLTVL…VQVLYYEQQR (274 aa)) form the NPH3 domain. A Phosphotyrosine modification is found at Tyr415. Disordered regions lie at residues 478–499 (EVTNDSDSPAPPPPQPAAVLPP) and 532–604 (FEKE…HSIS). A coiled-coil region spans residues 500 to 541 (KLSSYTDELSKLKRENQDLKLELLKMKMKLKEFEKESEKKTS). Residues 541–558 (SSSTISTNPSSPISTAST) show a composition bias toward low complexity. Positions 591 to 604 (GRTKPPKDRRHSIS) are enriched in basic residues.

This sequence belongs to the NPH3 family. Interacts with CAMTA3 and CUL3A.

It participates in protein modification; protein ubiquitination. In terms of biological role, acts as a substrate-specific adapter of an E3 ubiquitin-protein ligase complex (CUL3-RBX1-BTB) which mediates the ubiquitination and subsequent proteasomal degradation of target proteins. Involved in disease resistance. Acts as a substrate adapter that recruits CAMTA3/SR1 for ubiquitination and degradation during pathogen infection. Acts as a positive regulator of plant defense by removing the defense suppressor CAMTA3/SR1. The chain is BTB/POZ domain-containing protein SR1IP1 from Arabidopsis thaliana (Mouse-ear cress).